A 189-amino-acid chain; its full sequence is GMP synthase [glutamine-hydrolyzing] subunit A (189 aa).

The 185-residue stretch at 3-187 (RIDVIDNHGQ…LSVCDQQSVA (185 aa)) folds into the Glutamine amidotransferase type-1 domain. Cys73 functions as the Nucleophile in the catalytic mechanism. Active-site residues include His161 and Glu163.

Heterodimer composed of a glutamine amidotransferase subunit (A) and a GMP-binding subunit (B).

The enzyme catalyses XMP + L-glutamine + ATP + H2O = GMP + L-glutamate + AMP + diphosphate + 2 H(+). The protein operates within purine metabolism; GMP biosynthesis; GMP from XMP (L-Gln route): step 1/1. Functionally, catalyzes the synthesis of GMP from XMP. In Haloarcula marismortui (strain ATCC 43049 / DSM 3752 / JCM 8966 / VKM B-1809) (Halobacterium marismortui), this protein is GMP synthase [glutamine-hydrolyzing] subunit A.